The following is a 318-amino-acid chain: Thymidylate synthase (318 aa).

DUMP-binding positions include Arg25 and 180 to 181 (RR). Cys200 functions as the Nucleophile in the catalytic mechanism. DUMP-binding positions include 220–223 (RSGD), Asn231, and 261–263 (HIY). (6R)-5,10-methylene-5,6,7,8-tetrahydrofolate is bound at residue Asp223. Position 317 (Ala317) interacts with (6R)-5,10-methylene-5,6,7,8-tetrahydrofolate.

This sequence belongs to the thymidylate synthase family. Bacterial-type ThyA subfamily. Homodimer.

It is found in the cytoplasm. The catalysed reaction is dUMP + (6R)-5,10-methylene-5,6,7,8-tetrahydrofolate = 7,8-dihydrofolate + dTMP. Its pathway is pyrimidine metabolism; dTTP biosynthesis. Its function is as follows. Catalyzes the reductive methylation of 2'-deoxyuridine-5'-monophosphate (dUMP) to 2'-deoxythymidine-5'-monophosphate (dTMP) while utilizing 5,10-methylenetetrahydrofolate (mTHF) as the methyl donor and reductant in the reaction, yielding dihydrofolate (DHF) as a by-product. This enzymatic reaction provides an intracellular de novo source of dTMP, an essential precursor for DNA biosynthesis. The sequence is that of Thymidylate synthase from Bacillus cereus (strain ATCC 14579 / DSM 31 / CCUG 7414 / JCM 2152 / NBRC 15305 / NCIMB 9373 / NCTC 2599 / NRRL B-3711).